We begin with the raw amino-acid sequence, 452 residues long: MLRFYLFISLLCLVRSDTDETCPSFTKLSFHSAVVGTELNVRLLLYTRKNYTCAQIINSTTFGNLNVTKKTTFVVHGFRPTGSPPVWLQDLVKALLMVEDMNLVVVDWNRGATTVIYTQASNKTRKVAIILKEFIDQMLARGASLDDIYMIGVSLGAHISGFVGKMYNGQLGRITGLDPAGPLFNGKPPQDRLDPSDAQFVDVIHSDTDALGYKEPLGNIDFYPNGGVDQPGCPKTIFEAGMQYFKCDHQMSVYLYLSSLRKNCTITAYPCDSYRDYRNGKCINCGLPQGKPCPLLGYYADNWKDYLSEKDPPMTKAFFDTAEKEPYCMYHYFVDIITWNKSIRRGSITIKLKDEAGNTTESKINHEPVTFEKYHQVSLLARFNQDLDKVAEISLVFSTGAVIGPKYKLRILRMKLRSLAHPERPQLCRYDLVLTENVETPFQPIVCQKLQM.

The first 16 residues, 1-16 (MLRFYLFISLLCLVRS), serve as a signal peptide directing secretion. Residues asparagine 50, asparagine 66, and asparagine 122 are each glycosylated (N-linked (GlcNAc...) asparagine). Serine 154 acts as the Nucleophile in catalysis. Residue aspartate 178 is the Charge relay system of the active site. A disulfide bridge links cysteine 233 with cysteine 247. Histidine 249 functions as the Charge relay system in the catalytic mechanism. The N-linked (GlcNAc...) asparagine glycan is linked to asparagine 263. Disulfide bonds link cysteine 271/cysteine 282, cysteine 285/cysteine 293, and cysteine 428/cysteine 447.

Belongs to the AB hydrolase superfamily. Lipase family. In terms of assembly, interacts with TTMP/C3orf52. Expressed in liver and lacrimal gland.

It is found in the secreted. Its subcellular location is the cell membrane. It carries out the reaction 1-hexadecanoyl-2-(9Z-octadecenoyl)-sn-glycero-3-phosphate + H2O = 2-(9Z-octadecenoyl)-sn-glycero-3-phosphate + hexadecanoate + H(+). Hydrolyzes specifically phosphatidic acid (PA) to produce 2-acyl lysophosphatidic acid (LPA; a potent bioactive lipid mediator) and fatty acid. Does not hydrolyze other phospholipids, like phosphatidylserine (PS), phosphatidylcholine (PC) and phosphatidylethanolamine (PE) or triacylglycerol (TG). This is Lipase member H (LIPH) from Oryctolagus cuniculus (Rabbit).